We begin with the raw amino-acid sequence, 1108 residues long: DNA-directed RNA polymerase subunit beta (1108 aa).

This sequence belongs to the RNA polymerase beta chain family. As to quaternary structure, in plastids the minimal PEP RNA polymerase catalytic core is composed of four subunits: alpha, beta, beta', and beta''. When a (nuclear-encoded) sigma factor is associated with the core the holoenzyme is formed, which can initiate transcription.

The protein localises to the plastid. Its subcellular location is the chloroplast. The enzyme catalyses RNA(n) + a ribonucleoside 5'-triphosphate = RNA(n+1) + diphosphate. In terms of biological role, DNA-dependent RNA polymerase catalyzes the transcription of DNA into RNA using the four ribonucleoside triphosphates as substrates. The sequence is that of DNA-directed RNA polymerase subunit beta from Gnetum parvifolium (Small-leaved jointfir).